The sequence spans 180 residues: Inner membrane-spanning protein YciB (180 aa).

6 helical membrane passes run 4 to 24 (LLSE…GGGI), 25 to 45 (QSAT…CYII), 52 to 72 (LSII…ISGD), 76 to 96 (IKIK…TSGI), 118 to 138 (ITLS…NEIV), and 150 to 170 (FKVF…LPLL).

The protein belongs to the YciB family.

The protein localises to the cell inner membrane. Its function is as follows. Plays a role in cell envelope biogenesis, maintenance of cell envelope integrity and membrane homeostasis. In Rickettsia bellii (strain RML369-C), this protein is Inner membrane-spanning protein YciB.